A 226-amino-acid polypeptide reads, in one-letter code: Teichuronic acid biosynthesis protein TuaF (226 aa).

Helical transmembrane passes span 15–35 (NIIWIIAVPIILGAAGYILPS) and 202–222 (VLGVMIGLTIAFMFVVIPEFF).

It is found in the cell membrane. The protein operates within cell wall biogenesis; teichuronic acid biosynthesis. This is Teichuronic acid biosynthesis protein TuaF (tuaF) from Bacillus subtilis (strain 168).